The following is a 154-amino-acid chain: Superoxide dismutase [Cu-Zn] (154 aa).

3 residues coordinate Cu cation: histidine 45, histidine 47, and histidine 62. An intrachain disulfide couples cysteine 56 to cysteine 146. Positions 62, 70, 79, and 82 each coordinate Zn(2+). Histidine 120 is a binding site for Cu cation.

It belongs to the Cu-Zn superoxide dismutase family. As to quaternary structure, homodimer. It depends on Cu cation as a cofactor. Zn(2+) serves as cofactor.

It is found in the cytoplasm. It carries out the reaction 2 superoxide + 2 H(+) = H2O2 + O2. Functionally, destroys radicals which are normally produced within the cells and which are toxic to biological systems. This chain is Superoxide dismutase [Cu-Zn], found in Bombyx mori (Silk moth).